A 486-amino-acid polypeptide reads, in one-letter code: ATP-dependent 6-phosphofructokinase (486 aa).

Residues Gly105, 171-172 (RG), and 196-199 (GDGT) each bind ATP. Residue Asp197 participates in Mg(2+) binding. Residues 225-227 (TID), 270-272 (MGR), Glu323, and 378-381 (YMIR) each bind substrate. Catalysis depends on Asp227, which acts as the Proton acceptor. The short motif at 484–486 (SKV) is the Peroxisomal targeting signal element.

Belongs to the phosphofructokinase type A (PFKA) family. PPi-dependent PFK group II subfamily. Atypical ATP-dependent clade 'X' sub-subfamily. In terms of assembly, homotetramer. Mg(2+) serves as cofactor.

It localises to the glycosome. It carries out the reaction beta-D-fructose 6-phosphate + ATP = beta-D-fructose 1,6-bisphosphate + ADP + H(+). Its pathway is carbohydrate degradation; glycolysis; D-glyceraldehyde 3-phosphate and glycerone phosphate from D-glucose: step 3/4. Its activity is regulated as follows. Allosterically activated by AMP. Functionally, catalyzes the phosphorylation of D-fructose 6-phosphate to fructose 1,6-bisphosphate by ATP, the first committing step of glycolysis. The chain is ATP-dependent 6-phosphofructokinase from Leishmania donovani.